The primary structure comprises 571 residues: Urease subunit alpha (571 aa).

The Urease domain occupies 129-571 (GGIDSHIHFI…LPMAQRYFLF (443 aa)). Positions 134, 136, and 217 each coordinate Ni(2+). At K217 the chain carries N6-carboxylysine. Residue H219 participates in substrate binding. Positions 246 and 272 each coordinate Ni(2+). H320 serves as the catalytic Proton donor. D360 contacts Ni(2+).

Belongs to the metallo-dependent hydrolases superfamily. Urease alpha subunit family. As to quaternary structure, heterotrimer of UreA (gamma), UreB (beta) and UreC (alpha) subunits. Three heterotrimers associate to form the active enzyme. It depends on Ni cation as a cofactor. Post-translationally, carboxylation allows a single lysine to coordinate two nickel ions.

Its subcellular location is the cytoplasm. The enzyme catalyses urea + 2 H2O + H(+) = hydrogencarbonate + 2 NH4(+). Its pathway is nitrogen metabolism; urea degradation; CO(2) and NH(3) from urea (urease route): step 1/1. This is Urease subunit alpha from Cupriavidus necator (strain ATCC 17699 / DSM 428 / KCTC 22496 / NCIMB 10442 / H16 / Stanier 337) (Ralstonia eutropha).